We begin with the raw amino-acid sequence, 505 residues long: MAWENVRVRVAPSPTGDPHVGTAYMALFNAIFAKRFNGKMILRIEDTDQTRSRDDYEKNIFSALQWCGIQWDEGPDIGGPYGPYRQSERTEIYRKYAELLLKTDYAYKCFATPKELEEMRAVATTLGYRGGYDRRYRYLSSEEVDARTREGQPYTIRLKVPLTGECVLDDYCKGRVVFPWADVDDQVLIKSDGFPTYHFANVVDDHLMGITHVLRGEEWLSSTPKHLLLYQAFGWKAPTFLHMPLLLNPDGTKLSKRKNPTSIFYYRDAGYIKEAFMNFLTLMGYSMEGDEEIYSLEKLIANFDPRRIGKSGAVFDTRKLDWMNKHYLTHERSSESLLAKLKDWLINDEFFLKILPLCQSRITTLAEFIGFTGFFFSVLPEYSKEELLPTTISQEKAAILLYSYVKYLEKSDLWVKDQFYQGSKWLSSAFQVHHKKVVIPLLYVAITGKKQGLPLFDSMELLGKPRTRARLVHAQNLLGGVPKKIQTTIDKVLKEEDLESKIFEF.

The 'HIGH' region motif lies at 12 to 22 (PSPTGDPHVGT). Positions 253 to 257 (KLSKR) match the 'KMSKS' region motif. Lys-256 provides a ligand contact to ATP.

This sequence belongs to the class-I aminoacyl-tRNA synthetase family. Glutamate--tRNA ligase type 1 subfamily. In terms of assembly, monomer.

It is found in the cytoplasm. The enzyme catalyses tRNA(Glu) + L-glutamate + ATP = L-glutamyl-tRNA(Glu) + AMP + diphosphate. Functionally, catalyzes the attachment of glutamate to tRNA(Glu) in a two-step reaction: glutamate is first activated by ATP to form Glu-AMP and then transferred to the acceptor end of tRNA(Glu). In Chlamydia abortus (strain DSM 27085 / S26/3) (Chlamydophila abortus), this protein is Glutamate--tRNA ligase.